Reading from the N-terminus, the 259-residue chain is Acyl-[acyl-carrier-protein]--UDP-N-acetylglucosamine O-acyltransferase (259 aa).

This sequence belongs to the transferase hexapeptide repeat family. LpxA subfamily. Homotrimer.

It localises to the cytoplasm. The catalysed reaction is a (3R)-hydroxyacyl-[ACP] + UDP-N-acetyl-alpha-D-glucosamine = a UDP-3-O-[(3R)-3-hydroxyacyl]-N-acetyl-alpha-D-glucosamine + holo-[ACP]. It participates in glycolipid biosynthesis; lipid IV(A) biosynthesis; lipid IV(A) from (3R)-3-hydroxytetradecanoyl-[acyl-carrier-protein] and UDP-N-acetyl-alpha-D-glucosamine: step 1/6. Functionally, involved in the biosynthesis of lipid A, a phosphorylated glycolipid that anchors the lipopolysaccharide to the outer membrane of the cell. In Nautilia profundicola (strain ATCC BAA-1463 / DSM 18972 / AmH), this protein is Acyl-[acyl-carrier-protein]--UDP-N-acetylglucosamine O-acyltransferase.